A 492-amino-acid polypeptide reads, in one-letter code: Probable G-protein coupled receptor Mth-like 8 (492 aa).

The first 21 residues, 1–21, serve as a signal peptide directing secretion; it reads MAQFCILGVLLILSGTHCSWG. Residues 22-218 lie on the Extracellular side of the membrane; it reads FHEETHYPCA…FVLGVREWTY (197 aa). 4 disulfide bridges follow: Cys-30/Cys-82, Cys-84/Cys-89, Cys-93/Cys-184, and Cys-94/Cys-107. N-linked (GlcNAc...) asparagine glycosylation is found at Asn-37 and Asn-51. N-linked (GlcNAc...) asparagine glycans are attached at residues Asn-129, Asn-169, and Asn-192. Residues 219–239 traverse the membrane as a helical segment; it reads AICLLIAILSMFIVLMVYLMC. At 240 to 245 the chain is on the cytoplasmic side; it reads SEMRNS. Residues 246–266 form a helical membrane-spanning segment; it reads FYGVAIKAYAICMILGYALLA. The Extracellular portion of the chain corresponds to 267-282; sequence YLTLHNPANLSNAACR. Asn-275 carries an N-linked (GlcNAc...) asparagine glycan. The chain crosses the membrane as a helical span at residues 283 to 303; that stretch reads ILPSLALMNLVLSFYILSFIA. Residues 304–317 are Cytoplasmic-facing; the sequence is FKLYLSFYGVVFTK. A helical transmembrane segment spans residues 318 to 338; that stretch reads LMFWLIFTPIVLVAVGWSFFV. The Extracellular portion of the chain corresponds to 339-362; it reads GFSYYGSRLIFGGDTCWFDPRNWS. N-linked (GlcNAc...) asparagine glycosylation occurs at Asn-360. A helical transmembrane segment spans residues 363-383; sequence VMIYFYAPVFVACAISGFFYV. The Cytoplasmic segment spans residues 384 to 411; that stretch reads LSQIYIRDQPDIETEKSFESIEKNRFKS. Residues 412–432 traverse the membrane as a helical segment; it reads FWKYFGYTAVVWVVCICSFAF. The Extracellular segment spans residues 433–441; it reads NYYWENRSH. The N-linked (GlcNAc...) asparagine glycan is linked to Asn-438. Residues 442–462 traverse the membrane as a helical segment; the sequence is LNYAVSFCMAFHGFAALYALI. Over 463–492 the chain is Cytoplasmic; sequence GKNQQIQNFLRRIDNGEDTCENSVPLSSFG.

This sequence belongs to the G-protein coupled receptor 2 family. Mth subfamily.

It localises to the cell membrane. The chain is Probable G-protein coupled receptor Mth-like 8 (mthl8) from Drosophila melanogaster (Fruit fly).